The following is a 154-amino-acid chain: D-ribose pyranase 2 (154 aa).

The active-site Proton donor is histidine 20. Substrate contacts are provided by residues aspartate 28, histidine 98, and 121–123; that span reads WGN.

The protein belongs to the RbsD / FucU family. RbsD subfamily. As to quaternary structure, homodecamer.

Its subcellular location is the cytoplasm. The catalysed reaction is beta-D-ribopyranose = beta-D-ribofuranose. Its pathway is carbohydrate metabolism; D-ribose degradation; D-ribose 5-phosphate from beta-D-ribopyranose: step 1/2. Its function is as follows. Catalyzes the interconversion of beta-pyran and beta-furan forms of D-ribose. This Rubrobacter xylanophilus (strain DSM 9941 / JCM 11954 / NBRC 16129 / PRD-1) protein is D-ribose pyranase 2.